Consider the following 119-residue polypeptide: UPF0102 protein FP2501 (119 aa).

It belongs to the UPF0102 family.

In Flavobacterium psychrophilum (strain ATCC 49511 / DSM 21280 / CIP 103535 / JIP02/86), this protein is UPF0102 protein FP2501.